We begin with the raw amino-acid sequence, 128 residues long: Adrenodoxin homolog (128 aa).

In terms of domain architecture, 2Fe-2S ferredoxin-type spans 12-115 (EQIRIFFKTM…NAVFTVPRAT (104 aa)). 4 residues coordinate [2Fe-2S] cluster: Cys50, Cys56, Cys59, and Cys96.

Belongs to the adrenodoxin/putidaredoxin family. It depends on [2Fe-2S] cluster as a cofactor.

Its subcellular location is the mitosome. Ferredoxins are iron-sulfur proteins that transfer electrons in a wide variety of metabolic reactions. The sequence is that of Adrenodoxin homolog from Encephalitozoon cuniculi (strain GB-M1) (Microsporidian parasite).